Here is a 744-residue protein sequence, read N- to C-terminus: 1,4-alpha-glucan branching enzyme GlgB (744 aa).

Aspartate 415 (nucleophile) is an active-site residue. The active-site Proton donor is glutamate 468.

The protein belongs to the glycosyl hydrolase 13 family. GlgB subfamily. As to quaternary structure, monomer.

The enzyme catalyses Transfers a segment of a (1-&gt;4)-alpha-D-glucan chain to a primary hydroxy group in a similar glucan chain.. Its pathway is glycan biosynthesis; glycogen biosynthesis. In terms of biological role, catalyzes the formation of the alpha-1,6-glucosidic linkages in glycogen by scission of a 1,4-alpha-linked oligosaccharide from growing alpha-1,4-glucan chains and the subsequent attachment of the oligosaccharide to the alpha-1,6 position. This is 1,4-alpha-glucan branching enzyme GlgB from Shewanella frigidimarina (strain NCIMB 400).